Consider the following 213-residue polypeptide: CDP-diacylglycerol--inositol 3-phosphatidyltransferase (213 aa).

The Cytoplasmic portion of the chain corresponds to 1–5; the sequence is MPEEN. A helical transmembrane segment spans residues 6-26; it reads IFLFVPNLIGYARIVFAIISF. Tyr27 is a topological domain (lumenal). Residues 28–48 traverse the membrane as a helical segment; that stretch reads FMPCCPFTASSFYLLSGLLDA. Residues Asp47 and Asp50 each contribute to the Mg(2+) site. Over 49-73 the chain is Cytoplasmic; the sequence is FDGHAARALNQGTRFGAMLDMLTDR. A CDP-1,2-diacyl-sn-glycerol contacts are provided by Gly51, Arg55, and Thr61. Mg(2+) is bound by residues Asp68 and Asp72. The active-site Proton acceptor is the Asp72. A helical transmembrane segment spans residues 74-94; sequence CATMCLLVNLALLYPRATLLF. Position 95 (Gln95) is a topological domain, lumenal. A helical membrane pass occupies residues 96-116; the sequence is LSMSLDVASHWLHLHSSVVRG. The Cytoplasmic portion of the chain corresponds to 117–139; it reads SESHKMIDLSGNPVLRIYYTSRP. Residues 140–160 form a helical membrane-spanning segment; that stretch reads ALFTLCAGNELFYCLLYLFNF. Residues 161-174 are Lumenal-facing; it reads SEGPLVGSVGLFRM. The chain crosses the membrane as a helical span at residues 175–195; that stretch reads GLWVTAPIALLKSVISVIHLI. The Cytoplasmic segment spans residues 196 to 213; it reads TAARNMAALDAADRAKKK.

This sequence belongs to the CDP-alcohol phosphatidyltransferase class-I family. Mn(2+) is required as a cofactor. Mg(2+) serves as cofactor.

It is found in the endoplasmic reticulum membrane. The protein resides in the cell membrane. It catalyses the reaction a CDP-1,2-diacyl-sn-glycerol + myo-inositol = a 1,2-diacyl-sn-glycero-3-phospho-(1D-myo-inositol) + CMP + H(+). Its function is as follows. Catalyzes the biosynthesis of phosphatidylinositol (PtdIns) as well as PtdIns:inositol exchange reaction. May thus act to reduce an excessive cellular PtdIns content. The exchange activity is due to the reverse reaction of PtdIns synthase and is dependent on CMP, which is tightly bound to the enzyme. The chain is CDP-diacylglycerol--inositol 3-phosphatidyltransferase from Mus musculus (Mouse).